Here is a 66-residue protein sequence, read N- to C-terminus: Cold shock protein CspB (66 aa).

Residues 4-63 (GKVKWFNNEKGYGFIEVEGGSDVFVHFTAIQGEGFKSLEEGQEVSFEIVQGNRGPQAANV) form the CSD domain.

Homodimer.

It is found in the cytoplasm. Affects cell viability at low temperatures. The protein is Cold shock protein CspB (cspB) of Geobacillus stearothermophilus (Bacillus stearothermophilus).